Consider the following 186-residue polypeptide: dCTP deaminase, dUMP-forming (186 aa).

DCTP contacts are provided by residues 99-104, D117, 125-127, Q146, Y159, K166, and Q170; these read KSSIAR and TLE. E127 functions as the Proton donor/acceptor in the catalytic mechanism.

Belongs to the dCTP deaminase family. In terms of assembly, homotrimer.

The enzyme catalyses dCTP + 2 H2O = dUMP + NH4(+) + diphosphate. It participates in pyrimidine metabolism; dUMP biosynthesis; dUMP from dCTP: step 1/1. Bifunctional enzyme that catalyzes both the deamination of dCTP to dUTP and the hydrolysis of dUTP to dUMP without releasing the toxic dUTP intermediate. This is dCTP deaminase, dUMP-forming from Methanosphaerula palustris (strain ATCC BAA-1556 / DSM 19958 / E1-9c).